The chain runs to 42 residues: Photosystem I reaction center subunit IX (42 aa).

A helical transmembrane segment spans residues 8–28 (YLSTAPVIGVLWMTFTAGFII).

Belongs to the PsaJ family.

It localises to the plastid. It is found in the chloroplast thylakoid membrane. In terms of biological role, may help in the organization of the PsaE and PsaF subunits. The chain is Photosystem I reaction center subunit IX from Pyropia yezoensis (Susabi-nori).